The primary structure comprises 855 residues: Valine--tRNA ligase (855 aa).

Positions 42 to 52 match the 'HIGH' region motif; the sequence is PTISGKLHIGH. The 'KMSKS' region motif lies at 574 to 578; sequence KMSKS. Lysine 577 provides a ligand contact to ATP.

It belongs to the class-I aminoacyl-tRNA synthetase family. ValS type 2 subfamily. In terms of assembly, monomer.

It localises to the cytoplasm. The catalysed reaction is tRNA(Val) + L-valine + ATP = L-valyl-tRNA(Val) + AMP + diphosphate. Catalyzes the attachment of valine to tRNA(Val). As ValRS can inadvertently accommodate and process structurally similar amino acids such as threonine, to avoid such errors, it has a 'posttransfer' editing activity that hydrolyzes mischarged Thr-tRNA(Val) in a tRNA-dependent manner. The sequence is that of Valine--tRNA ligase from Wolbachia sp. subsp. Brugia malayi (strain TRS).